The primary structure comprises 611 residues: Glutamine--fructose-6-phosphate aminotransferase [isomerizing] (611 aa).

Cys2 serves as the catalytic Nucleophile; for GATase activity. In terms of domain architecture, Glutamine amidotransferase type-2 spans 2–219 (CGIVGAVAER…EGDIAEIRRD (218 aa)). SIS domains follow at residues 287–427 (AADL…VRGT) and 460–601 (IAEL…VDQP). The active-site For Fru-6P isomerization activity is the Lys606.

As to quaternary structure, homodimer.

The protein resides in the cytoplasm. The catalysed reaction is D-fructose 6-phosphate + L-glutamine = D-glucosamine 6-phosphate + L-glutamate. In terms of biological role, catalyzes the first step in hexosamine metabolism, converting fructose-6P into glucosamine-6P using glutamine as a nitrogen source. This chain is Glutamine--fructose-6-phosphate aminotransferase [isomerizing], found in Pseudomonas putida (strain ATCC 47054 / DSM 6125 / CFBP 8728 / NCIMB 11950 / KT2440).